The primary structure comprises 437 residues: Sulfite reductase, dissimilatory-type subunit alpha (437 aa).

The [4Fe-4S] cluster site is built by Cys177, Cys183, Cys221, Cys225, Cys284, Cys303, Cys306, and Cys309. The 4Fe-4S ferredoxin-type domain occupies 294 to 322 (SKLSIDNKECVRCMHCINTMPRALHIGDE).

As to quaternary structure, heterohexamer of two alpha, two beta and two gamma subunits.

Its function is as follows. Part of the complex that catalyzes the reduction of sulfite to sulfide. The alpha and beta subunits may have arisen by gene duplication. They both bind 2 iron-sulfur clusters, but the alpha subunit seems to be catalytically inactive, due to substitutions along the putative substrate access channel, and because it binds sirohydrochlorin (the dematallated form of siroheme) instead of siroheme. The sequence is that of Sulfite reductase, dissimilatory-type subunit alpha (dsvA) from Nitratidesulfovibrio vulgaris (strain ATCC 29579 / DSM 644 / CCUG 34227 / NCIMB 8303 / VKM B-1760 / Hildenborough) (Desulfovibrio vulgaris).